The primary structure comprises 206 residues: Small ribosomal subunit protein uS4 (206 aa).

One can recognise an S4 RNA-binding domain in the interval 96–158 (GRLDNVVYRM…AKKQSRIKAA (63 aa)).

This sequence belongs to the universal ribosomal protein uS4 family. Part of the 30S ribosomal subunit. Contacts protein S5. The interaction surface between S4 and S5 is involved in control of translational fidelity.

Functionally, one of the primary rRNA binding proteins, it binds directly to 16S rRNA where it nucleates assembly of the body of the 30S subunit. In terms of biological role, with S5 and S12 plays an important role in translational accuracy. This chain is Small ribosomal subunit protein uS4, found in Vibrio cholerae serotype O1 (strain ATCC 39541 / Classical Ogawa 395 / O395).